The sequence spans 20 residues: Protein PR-L1 (20 aa).

It belongs to the BetVI family.

The sequence is that of Protein PR-L1 from Lupinus luteus (European yellow lupine).